The sequence spans 605 residues: Pescadillo homolog (605 aa).

Residues 346-440 enclose the BRCT domain; sequence PVATLFSEFV…ELVPANLYLP (95 aa). The tract at residues 449-553 is disordered; sequence SPWGDSTGYD…RKATEEEEEK (105 aa). Positions 461–508 are enriched in acidic residues; sequence AENDEDVEGSDAEEIDESADEDAESEEVEEDDTAAVALNEDDEDDEDE. The segment covering 526-537 has biased composition (basic and acidic residues); sequence EAKDVIDSESSD. Residues 533–605 are a coiled coil; that stretch reads SESSDKKKKK…KAKLAKLDKK (73 aa).

It belongs to the pescadillo family. Component of the NOP7 complex, composed of ERB1, NOP7 and YTM1. The complex is held together by ERB1, which interacts with NOP7 via its N-terminal domain and with YTM1 via a high-affinity interaction between the seven-bladed beta-propeller domains of the 2 proteins. The NOP7 complex associates with the 66S pre-ribosome.

Its subcellular location is the nucleus. It is found in the nucleolus. It localises to the nucleoplasm. In terms of biological role, component of the NOP7 complex, which is required for maturation of the 25S and 5.8S ribosomal RNAs and formation of the 60S ribosome. The protein is Pescadillo homolog of Kluyveromyces lactis (strain ATCC 8585 / CBS 2359 / DSM 70799 / NBRC 1267 / NRRL Y-1140 / WM37) (Yeast).